A 510-amino-acid chain; its full sequence is Bifunctional purine biosynthesis protein PurH (510 aa).

In terms of domain architecture, MGS-like spans 1 to 142 (MRALLSVSDK…KNYKDVMVLC (142 aa)).

Belongs to the PurH family.

It catalyses the reaction (6R)-10-formyltetrahydrofolate + 5-amino-1-(5-phospho-beta-D-ribosyl)imidazole-4-carboxamide = 5-formamido-1-(5-phospho-D-ribosyl)imidazole-4-carboxamide + (6S)-5,6,7,8-tetrahydrofolate. The catalysed reaction is IMP + H2O = 5-formamido-1-(5-phospho-D-ribosyl)imidazole-4-carboxamide. The protein operates within purine metabolism; IMP biosynthesis via de novo pathway; 5-formamido-1-(5-phospho-D-ribosyl)imidazole-4-carboxamide from 5-amino-1-(5-phospho-D-ribosyl)imidazole-4-carboxamide (10-formyl THF route): step 1/1. It participates in purine metabolism; IMP biosynthesis via de novo pathway; IMP from 5-formamido-1-(5-phospho-D-ribosyl)imidazole-4-carboxamide: step 1/1. This Campylobacter jejuni subsp. jejuni serotype O:2 (strain ATCC 700819 / NCTC 11168) protein is Bifunctional purine biosynthesis protein PurH.